The following is a 568-amino-acid chain: Potassium-transporting ATPase potassium-binding subunit (568 aa).

Transmembrane regions (helical) follow at residues 3–23, 64–84, 133–153, 179–199, 255–275, 281–301, 375–395, 418–438, 497–517, and 535–555; these read TEIL…YPLG, FLKA…VLLV, FVIM…MAGV, ILLP…TPMG, MVEC…LGFY, LGYS…FINV, FGGV…AVFI, IATF…AISS, IVLI…AGLL, and VTFA…SFFP.

The protein belongs to the KdpA family. As to quaternary structure, the system is composed of three essential subunits: KdpA, KdpB and KdpC.

It is found in the cell inner membrane. Its function is as follows. Part of the high-affinity ATP-driven potassium transport (or Kdp) system, which catalyzes the hydrolysis of ATP coupled with the electrogenic transport of potassium into the cytoplasm. This subunit binds the periplasmic potassium ions and delivers the ions to the membrane domain of KdpB through an intramembrane tunnel. This chain is Potassium-transporting ATPase potassium-binding subunit, found in Bacteroides fragilis (strain ATCC 25285 / DSM 2151 / CCUG 4856 / JCM 11019 / LMG 10263 / NCTC 9343 / Onslow / VPI 2553 / EN-2).